The sequence spans 305 residues: Methionyl-tRNA formyltransferase (305 aa).

A (6S)-5,6,7,8-tetrahydrofolate-binding site is contributed by 111–114 (SLLP).

The protein belongs to the Fmt family.

It carries out the reaction L-methionyl-tRNA(fMet) + (6R)-10-formyltetrahydrofolate = N-formyl-L-methionyl-tRNA(fMet) + (6S)-5,6,7,8-tetrahydrofolate + H(+). Its function is as follows. Attaches a formyl group to the free amino group of methionyl-tRNA(fMet). The formyl group appears to play a dual role in the initiator identity of N-formylmethionyl-tRNA by promoting its recognition by IF2 and preventing the misappropriation of this tRNA by the elongation apparatus. In Helicobacter pylori (strain P12), this protein is Methionyl-tRNA formyltransferase.